The following is a 227-amino-acid chain: MICOS complex subunit MIC19 (227 aa).

A lipid anchor (N-myristoyl glycine) is attached at Gly2. Ser29 carries the phosphoserine modification. 2 disordered regions span residues 34–61 (DRMKESSPSGSKSQRYSGAYGASVSDEE) and 73–92 (EQAKKESEDQKRLKQAKELD). Over residues 39 to 49 (SSPSGSKSQRY) the composition is skewed to polar residues. Tyr49 is subject to Phosphotyrosine. Ser50, Ser56, and Ser58 each carry phosphoserine. Position 142 is an N6-acetyllysine (Lys142). Residues 180 to 222 (HPVCADLQAKILQCYRENTHQTLKCSALATQYMHCVNHAKQSM) enclose the CHCH domain. 2 consecutive short sequence motifs (cx9C motif) follow at residues 183 to 193 (CADLQAKILQC) and 204 to 214 (CSALATQYMHC). 2 disulfides stabilise this stretch: Cys183/Cys214 and Cys193/Cys204.

This sequence belongs to the MICOS complex subunit Mic19 family. Metazoan Mic19 subfamily. Component of the mitochondrial contact site and cristae organizing system (MICOS) complex, composed of at least MICOS10/MIC10, CHCHD3/MIC19, CHCHD6/MIC25, APOOL/MIC27, IMMT/MIC60, APOO/MIC23/MIC26 and MICOS13/MIC13. This complex was also known under the names MINOS or MitOS complex. The MICOS complex associates with mitochondrial outer membrane proteins SAMM50, MTX1 and MTX2 (together described as components of the mitochondrial outer membrane sorting assembly machinery (SAM) complex) and DNAJC11, mitochondrial inner membrane protein TMEM11 and with HSPA9. The MICOS and SAM complexes together with DNAJC11 are part of a large protein complex spanning both membranes termed the mitochondrial intermembrane space bridging (MIB) complex. Interacts with HSPA1A/HSPA1B and OPA1, preferentially with the soluble OPA1 form. Interacts with IMMT/MIC60. As to quaternary structure, (Microbial infection) Interacts with human cytomegalovirus protein UL13; this interaction alters cristae architecture. Detected at low levels in brain, placenta, lung, liver, kidney and pancreas with increased levels in heart and skeletal muscle. Higher expression in primary lung cancers than in normal lung tissue.

The protein resides in the mitochondrion inner membrane. The protein localises to the cytoplasm. It localises to the nucleus. It is found in the mitochondrion. In terms of biological role, component of the MICOS complex, a large protein complex of the mitochondrial inner membrane that plays crucial roles in the maintenance of crista junctions, inner membrane architecture, and formation of contact sites to the outer membrane. Plays an important role in the maintenance of the MICOS complex stability and the mitochondrial cristae morphology. Has also been shown to function as a transcription factor which binds to the BAG1 promoter and represses BAG1 transcription. The sequence is that of MICOS complex subunit MIC19 (CHCHD3) from Homo sapiens (Human).